An 81-amino-acid chain; its full sequence is Cell division protein ZapB (81 aa).

Positions 5-81 (LEVFEKLESK…QALLGRMEEV (77 aa)) form a coiled coil. The tract at residues 43 to 64 (VHSAQNGREELERENQQLREQQ) is disordered. A compositionally biased stretch (basic and acidic residues) spans 49-59 (GREELERENQQ).

Belongs to the ZapB family. As to quaternary structure, homodimer. The ends of the coiled-coil dimer bind to each other, forming polymers. Interacts with FtsZ.

It is found in the cytoplasm. Non-essential, abundant cell division factor that is required for proper Z-ring formation. It is recruited early to the divisome by direct interaction with FtsZ, stimulating Z-ring assembly and thereby promoting cell division earlier in the cell cycle. Its recruitment to the Z-ring requires functional FtsA or ZipA. This is Cell division protein ZapB from Enterobacter sp. (strain 638).